The following is a 379-amino-acid chain: Probable leucine aminopeptidase ARB_01443 (379 aa).

Residues 1–18 (MKIATLAVVSAFAATAIA) form the signal peptide. Positions 182 and 201 each coordinate Zn(2+). N-linked (GlcNAc...) asparagine glycosylation is found at Asn202 and Asn226. Zn(2+) contacts are provided by Glu240 and Asp267. A disulfide bridge connects residues Cys312 and Cys316. His345 contributes to the Zn(2+) binding site.

The protein belongs to the peptidase M28 family. M28E subfamily. As to quaternary structure, monomer. Requires Zn(2+) as cofactor.

Its subcellular location is the secreted. Its function is as follows. Probable extracellular aminopeptidase which contributes to pathogenicity. In Arthroderma benhamiae (strain ATCC MYA-4681 / CBS 112371) (Trichophyton mentagrophytes), this protein is Probable leucine aminopeptidase ARB_01443.